Here is a 310-residue protein sequence, read N- to C-terminus: Vomeronasal type-1 receptor 3 (310 aa).

The Extracellular portion of the chain corresponds to 1–5 (MASKD). Residues 6–26 (FAIGMILSQIMVGFLGNFFLL) traverse the membrane as a helical segment. At 27–50 (YHYSFLHFTRGMLQSTDLTLKHLT) the chain is on the cytoplasmic side. A helical transmembrane segment spans residues 51–71 (IANSLVILSKGIPQTMAAFGL). Over 72-91 (KDSLSDIGCKFVFYVHRVGR) the chain is Extracellular. The chain crosses the membrane as a helical span at residues 92–112 (AVCTGNACLLSVFQVITISSS). Residues 113–129 (EFRWAELKLHAHKYIRS) are Cytoplasmic-facing. Residues 130–150 (FILVLCWILNTLVNITVPLHV) form a helical membrane-spanning segment. Over 151 to 186 (TGKWNSINSTKTNDYGYCSGGSRSRIPHSLHIVLLS) the chain is Extracellular. Asn-158 carries N-linked (GlcNAc...) asparagine glycosylation. Residues 187-207 (SLDVLCLGLMTLASGSMVFIL) form a helical membrane-spanning segment. Topologically, residues 208 to 235 (HRLKQQVQHIHGTNLSPRSSPESRVTQS) are cytoplasmic. The chain crosses the membrane as a helical span at residues 236-258 (ILVLVSTLCYFTRSPPSLHMSLF). Residues 259–263 (PNPSW) lie on the Extracellular side of the membrane. Residues 264–284 (WPLNASALITACFPTVSPFVL) form a helical membrane-spanning segment. The Cytoplasmic portion of the chain corresponds to 285-310 (MSRHPRIPRLGSACCGRNPQFPKLVR).

It belongs to the G-protein coupled receptor 1 family.

Its subcellular location is the cell membrane. In terms of biological role, putative pheromone receptor. In Pan troglodytes (Chimpanzee), this protein is Vomeronasal type-1 receptor 3 (VN1R3).